The primary structure comprises 821 residues: Serine/threonine-protein kinase RAD53 (821 aa).

Ser-24 is modified (phosphoserine). The FHA 1 domain maps to 66-116 (WTFGRNPACDYHLGNISRLSNKHFQILLGEDGNLLLNDISTNGTWLNGQKV). Ser-175 carries the post-translational modification Phosphoserine. A Protein kinase domain is found at 198–466 (SIIDEVVGQG…AAKALNHPWI (269 aa)). ATP is bound by residues 204–212 (VGQGAFATV) and Lys-227. Asp-319 acts as the Proton acceptor in catalysis. 2 positions are modified to phosphoserine: Ser-547 and Ser-560. An FHA 2 domain is found at 601–664 (FFIGRSEDCN…NVSYLNNNRM (64 aa)). A disordered region spans residues 735–770 (AAQRANQPSASSSSMSAKKPPVSDTNNNGNNSVLND). Over residues 742–770 (PSASSSSMSAKKPPVSDTNNNGNNSVLND) the composition is skewed to low complexity. Phosphoserine is present on residues Ser-774 and Ser-793. The disordered stretch occupies residues 791 to 821 (SLSQSQIDPSKKVKRAKLDQTSKGPENLQFS). Residues 809–821 (DQTSKGPENLQFS) are compositionally biased toward polar residues.

This sequence belongs to the protein kinase superfamily. CAMK Ser/Thr protein kinase family. CHEK2 subfamily. As to quaternary structure, interacts (via domain FHA 1) with PTC2 (when phosphorylated); the interaction is direct and serves to regulate DNA damage checkpoint signaling. Interacts with PIN4. In terms of processing, autophosphorylated. Phosphorylated in response to DNA double-strand breaks; dephosphorylation is mediated by PTC2 and PTC3.

It is found in the nucleus. It catalyses the reaction L-seryl-[protein] + ATP = O-phospho-L-seryl-[protein] + ADP + H(+). The catalysed reaction is L-threonyl-[protein] + ATP = O-phospho-L-threonyl-[protein] + ADP + H(+). It carries out the reaction L-tyrosyl-[protein] + ATP = O-phospho-L-tyrosyl-[protein] + ADP + H(+). Inactivated by dephosphorylation via recruitment of PTC2. Its function is as follows. Controls S-phase checkpoint as well as G1 and G2 DNA damage checkpoints. Phosphorylates proteins on serine, threonine, and tyrosine. Prevents entry into anaphase and mitotic exit after DNA damage via regulation of the Polo kinase CDC5. Seems to be involved in the phosphorylation of RPH1. This chain is Serine/threonine-protein kinase RAD53 (RAD53), found in Saccharomyces cerevisiae (strain ATCC 204508 / S288c) (Baker's yeast).